Reading from the N-terminus, the 165-residue chain is UPF0303 protein BamMC406_1480 (165 aa).

This sequence belongs to the UPF0303 family.

The protein is UPF0303 protein BamMC406_1480 of Burkholderia ambifaria (strain MC40-6).